Consider the following 367-residue polypeptide: Chorismate synthase (367 aa).

Arg-48 contributes to the NADP(+) binding site. FMN is bound by residues 125 to 127 (RSS), 241 to 242 (NA), Gly-285, 300 to 304 (KPTSS), and Arg-326.

The protein belongs to the chorismate synthase family. In terms of assembly, homotetramer. FMNH2 serves as cofactor.

It carries out the reaction 5-O-(1-carboxyvinyl)-3-phosphoshikimate = chorismate + phosphate. It functions in the pathway metabolic intermediate biosynthesis; chorismate biosynthesis; chorismate from D-erythrose 4-phosphate and phosphoenolpyruvate: step 7/7. Functionally, catalyzes the anti-1,4-elimination of the C-3 phosphate and the C-6 proR hydrogen from 5-enolpyruvylshikimate-3-phosphate (EPSP) to yield chorismate, which is the branch point compound that serves as the starting substrate for the three terminal pathways of aromatic amino acid biosynthesis. This reaction introduces a second double bond into the aromatic ring system. This chain is Chorismate synthase, found in Dinoroseobacter shibae (strain DSM 16493 / NCIMB 14021 / DFL 12).